Here is a 174-residue protein sequence, read N- to C-terminus: Probable N-acetyltransferase Rv2775 (174 aa).

The 167-residue stretch at 6–172 (IRIRAAKPID…VGYRLYRSAP (167 aa)) folds into the N-acetyltransferase domain.

Belongs to the acetyltransferase family.

This Mycobacterium tuberculosis (strain ATCC 25618 / H37Rv) protein is Probable N-acetyltransferase Rv2775.